The sequence spans 338 residues: Ketol-acid reductoisomerase (NADP(+)) (338 aa).

Positions 1–181 (MTVYYDKDCN…GGGRTAIIET (181 aa)) constitute a KARI N-terminal Rossmann domain. NADP(+) contacts are provided by residues 24 to 27 (FGSQ), arginine 47, serine 52, and 82 to 85 (DENQ). Histidine 107 is a catalytic residue. Position 133 (glycine 133) interacts with NADP(+). Positions 182–327 (TFKDETETDL…VKLRTMMPWI (146 aa)) constitute a KARI C-terminal knotted domain. Aspartate 190, glutamate 194, glutamate 226, and glutamate 230 together coordinate Mg(2+). Substrate is bound at residue serine 251.

Belongs to the ketol-acid reductoisomerase family. Requires Mg(2+) as cofactor.

The catalysed reaction is (2R)-2,3-dihydroxy-3-methylbutanoate + NADP(+) = (2S)-2-acetolactate + NADPH + H(+). It carries out the reaction (2R,3R)-2,3-dihydroxy-3-methylpentanoate + NADP(+) = (S)-2-ethyl-2-hydroxy-3-oxobutanoate + NADPH + H(+). Its pathway is amino-acid biosynthesis; L-isoleucine biosynthesis; L-isoleucine from 2-oxobutanoate: step 2/4. The protein operates within amino-acid biosynthesis; L-valine biosynthesis; L-valine from pyruvate: step 2/4. Involved in the biosynthesis of branched-chain amino acids (BCAA). Catalyzes an alkyl-migration followed by a ketol-acid reduction of (S)-2-acetolactate (S2AL) to yield (R)-2,3-dihydroxy-isovalerate. In the isomerase reaction, S2AL is rearranged via a Mg-dependent methyl migration to produce 3-hydroxy-3-methyl-2-ketobutyrate (HMKB). In the reductase reaction, this 2-ketoacid undergoes a metal-dependent reduction by NADPH to yield (R)-2,3-dihydroxy-isovalerate. The polypeptide is Ketol-acid reductoisomerase (NADP(+)) (Sulfurimonas denitrificans (strain ATCC 33889 / DSM 1251) (Thiomicrospira denitrificans (strain ATCC 33889 / DSM 1251))).